The sequence spans 788 residues: Xylulose-5-phosphate phosphoketolase (788 aa).

This sequence belongs to the XFP family. In terms of assembly, homohexamer. The cofactor is thiamine diphosphate.

It catalyses the reaction D-xylulose 5-phosphate + phosphate = acetyl phosphate + D-glyceraldehyde 3-phosphate + H2O. This is Xylulose-5-phosphate phosphoketolase (xpkA) from Lactiplantibacillus pentosus (Lactobacillus pentosus).